The chain runs to 270 residues: 4-hydroxy-tetrahydrodipicolinate reductase (270 aa).

Residues 11–16 (GAGGRM) and Glu-37 each bind NAD(+). Arg-38 lines the NADP(+) pocket. NAD(+)-binding positions include 101 to 103 (GTT) and 125 to 128 (APNM). Residue His-158 is the Proton donor/acceptor of the active site. His-159 contributes to the (S)-2,3,4,5-tetrahydrodipicolinate binding site. The Proton donor role is filled by Lys-162. 168 to 169 (GT) is a (S)-2,3,4,5-tetrahydrodipicolinate binding site.

The protein belongs to the DapB family.

Its subcellular location is the cytoplasm. The enzyme catalyses (S)-2,3,4,5-tetrahydrodipicolinate + NAD(+) + H2O = (2S,4S)-4-hydroxy-2,3,4,5-tetrahydrodipicolinate + NADH + H(+). It catalyses the reaction (S)-2,3,4,5-tetrahydrodipicolinate + NADP(+) + H2O = (2S,4S)-4-hydroxy-2,3,4,5-tetrahydrodipicolinate + NADPH + H(+). It functions in the pathway amino-acid biosynthesis; L-lysine biosynthesis via DAP pathway; (S)-tetrahydrodipicolinate from L-aspartate: step 4/4. Catalyzes the conversion of 4-hydroxy-tetrahydrodipicolinate (HTPA) to tetrahydrodipicolinate. The protein is 4-hydroxy-tetrahydrodipicolinate reductase of Shewanella sp. (strain ANA-3).